A 213-amino-acid chain; its full sequence is Pyrrolidone-carboxylate peptidase (213 aa).

Catalysis depends on residues Glu-80, Cys-143, and His-166.

This sequence belongs to the peptidase C15 family. Homotetramer.

Its subcellular location is the cytoplasm. The enzyme catalyses Release of an N-terminal pyroglutamyl group from a polypeptide, the second amino acid generally not being Pro.. Removes 5-oxoproline from various penultimate amino acid residues except L-proline. The chain is Pyrrolidone-carboxylate peptidase from Clavibacter michiganensis subsp. michiganensis (strain NCPPB 382).